The primary structure comprises 319 residues: tRNA-cytidine(32) 2-sulfurtransferase (319 aa).

The PP-loop motif motif lies at 49 to 54; that stretch reads SGGKDS. [4Fe-4S] cluster contacts are provided by C124, C127, and C215.

Belongs to the TtcA family. In terms of assembly, homodimer. Mg(2+) is required as a cofactor. It depends on [4Fe-4S] cluster as a cofactor.

It localises to the cytoplasm. It catalyses the reaction cytidine(32) in tRNA + S-sulfanyl-L-cysteinyl-[cysteine desulfurase] + AH2 + ATP = 2-thiocytidine(32) in tRNA + L-cysteinyl-[cysteine desulfurase] + A + AMP + diphosphate + H(+). Its pathway is tRNA modification. In terms of biological role, catalyzes the ATP-dependent 2-thiolation of cytidine in position 32 of tRNA, to form 2-thiocytidine (s(2)C32). The sulfur atoms are provided by the cysteine/cysteine desulfurase (IscS) system. The protein is tRNA-cytidine(32) 2-sulfurtransferase of Shewanella amazonensis (strain ATCC BAA-1098 / SB2B).